The primary structure comprises 165 residues: FELPSIPFPSPGSDEILFVVRDTTFNTKEPVNVKVSDFWTNRNVKRKPYEDVYGQSVFTTSGSKWLTSYMTVSINNKDYTMAAVSGYKDGFSSVFVKSGQIQLQHYYNSVADFVGGDENSIPSKTYLDETPSYFVNVEAYESGSGNILVMCISNKESYFECEEQQ.

Residues Cys151 and Cys161 are joined by a disulfide bond.

The protein belongs to the TDH hemolysin family. In terms of assembly, homodimer.

Its function is as follows. Bacterial hemolysins are exotoxins that attack blood cell membranes and cause cell rupture by mechanisms not clearly defined. In Grimontia hollisae (Vibrio hollisae), this protein is Hemolysin, heat labile.